The chain runs to 350 residues: tRNA uridine(34) hydroxylase (350 aa).

The Rhodanese domain occupies 146-240 (DDPDAVFIDM…YARRAREQGL (95 aa)). Cysteine 200 acts as the Cysteine persulfide intermediate in catalysis. Positions 319-328 (RRRRAGRENG) are enriched in basic and acidic residues. Residues 319 to 350 (RRRRAGRENGNKIFNKSRGRLNSKLSIPDPAE) are disordered.

This sequence belongs to the TrhO family.

The enzyme catalyses uridine(34) in tRNA + AH2 + O2 = 5-hydroxyuridine(34) in tRNA + A + H2O. Catalyzes oxygen-dependent 5-hydroxyuridine (ho5U) modification at position 34 in tRNAs. The chain is tRNA uridine(34) hydroxylase from Salmonella typhi.